Consider the following 107-residue polypeptide: Guanylate cyclase activator 2B (107 aa).

Residues 1-21 (MSGSQLWAAVVVLLLLQSAQG) form the signal peptide. Positions 22–92 (VYIKYHGFQV…STFKALRTIA (71 aa)) are excised as a propeptide. Disulfide bonds link cysteine 63/cysteine 76, cysteine 96/cysteine 104, and cysteine 99/cysteine 107.

The protein belongs to the guanylin family.

The protein localises to the secreted. Its function is as follows. Endogenous activator of intestinal guanylate cyclase. It stimulates this enzyme through the same receptor binding region as the heat-stable enterotoxins. May be a potent physiological regulator of intestinal fluid and electrolyte transport. May be an autocrine/paracrine regulator of intestinal salt and water transport. In Notomys alexis (Spinifex hopping mouse), this protein is Guanylate cyclase activator 2B (GUCA2B).